We begin with the raw amino-acid sequence, 659 residues long: Cysteine-rich receptor-like protein kinase 18 (659 aa).

Positions 1–27 are cleaved as a signal peptide; it reads MATKSCELVLCFFVFFVISFSAISVSA. 2 Gnk2-homologous domains span residues 28-131 and 137-250; these read QTCD…NRPF and MDPL…VYPF. Residues 28–287 are Extracellular-facing; the sequence is QTCDNTTGTF…KNDSRISGGK (260 aa). Residues asparagine 32, asparagine 57, asparagine 152, asparagine 162, asparagine 179, asparagine 180, asparagine 197, asparagine 275, and asparagine 279 are each glycosylated (N-linked (GlcNAc...) asparagine). Residues 288–308 form a helical membrane-spanning segment; it reads IAAIVVVTVVTIILVVLGFVI. The Cytoplasmic portion of the chain corresponds to 309 to 659; sequence SNRRKQKQEM…EATITDVNPR (351 aa). Residues 339–611 enclose the Protein kinase domain; sequence FSERNKLGKG…PTMSTIHQML (273 aa). ATP-binding positions include 345-353 and lysine 367; that span reads LGKGGFGEV. Phosphotyrosine is present on tyrosine 412. Catalysis depends on aspartate 464, which acts as the Proton acceptor. Serine 468 bears the Phosphoserine mark. A Phosphothreonine modification is found at threonine 504. Tyrosine 512 is subject to Phosphotyrosine.

The protein belongs to the protein kinase superfamily. Ser/Thr protein kinase family. CRK subfamily.

It localises to the membrane. It carries out the reaction L-seryl-[protein] + ATP = O-phospho-L-seryl-[protein] + ADP + H(+). The enzyme catalyses L-threonyl-[protein] + ATP = O-phospho-L-threonyl-[protein] + ADP + H(+). In Arabidopsis thaliana (Mouse-ear cress), this protein is Cysteine-rich receptor-like protein kinase 18 (CRK18).